The sequence spans 269 residues: tRNA pseudouridine synthase A (269 aa).

Aspartate 51 serves as the catalytic Nucleophile. A substrate-binding site is contributed by tyrosine 109.

The protein belongs to the tRNA pseudouridine synthase TruA family. As to quaternary structure, homodimer.

It carries out the reaction uridine(38/39/40) in tRNA = pseudouridine(38/39/40) in tRNA. Functionally, formation of pseudouridine at positions 38, 39 and 40 in the anticodon stem and loop of transfer RNAs. In Haemophilus influenzae (strain 86-028NP), this protein is tRNA pseudouridine synthase A.